Here is a 104-residue protein sequence, read N- to C-terminus: NADH-quinone oxidoreductase subunit K (104 aa).

Transmembrane regions (helical) follow at residues 4–24, 28–48, and 64–84; these read VAYY…AFLI, IITI…SFVA, and IFVF…LAII.

The protein belongs to the complex I subunit 4L family. In terms of assembly, NDH-1 is composed of 14 different subunits. Subunits NuoA, H, J, K, L, M, N constitute the membrane sector of the complex.

The protein resides in the cell inner membrane. It carries out the reaction a quinone + NADH + 5 H(+)(in) = a quinol + NAD(+) + 4 H(+)(out). Functionally, NDH-1 shuttles electrons from NADH, via FMN and iron-sulfur (Fe-S) centers, to quinones in the respiratory chain. The immediate electron acceptor for the enzyme in this species is believed to be ubiquinone. Couples the redox reaction to proton translocation (for every two electrons transferred, four hydrogen ions are translocated across the cytoplasmic membrane), and thus conserves the redox energy in a proton gradient. This chain is NADH-quinone oxidoreductase subunit K, found in Acidobacterium capsulatum (strain ATCC 51196 / DSM 11244 / BCRC 80197 / JCM 7670 / NBRC 15755 / NCIMB 13165 / 161).